We begin with the raw amino-acid sequence, 468 residues long: MAKGSKGYIVGVMGPVVDVKFPEEELPDIFNALEVVNPQTGQKIVLEVEQLIGDGVVRTVAMDSTDGLMKGLEVVDTGEPITAPVGKEVLGRILNVIGEPVDEAGEIKSKERWPIHRPAPELIEQSTEIEILETGIKVIDLLAPFPKGGKIGFFGGAGVGKTVLVMELIRNIAIEHKGFSVFAGVGERTREGNELWLEMQESGVLGNTVLVFGQMNEPPGARFRVALTALTIAEYFRDVEGRDVLLFIDNIFRFVQAGSEVSALLGRMPSAVGYQPTLATDMGELQERITSTRRGSITSVQAIYVPADDITDPAPATTFAHLDATVVLSRRIAELGLYPAVDPLDSSSKILDPAVVGREHYEVARGVQEVLQRYKDLQDIIAILGVEELSPEDKLVVHRARRIQRFLSQPFHVAERFTGRPGKYVPLEETIRGFKEILDGKLDDVPEQAFLMAGTIDEVKERAKEMRS.

Residue 155–162 (GGAGVGKT) participates in ATP binding.

The protein belongs to the ATPase alpha/beta chains family. In terms of assembly, F-type ATPases have 2 components, CF(1) - the catalytic core - and CF(0) - the membrane proton channel. CF(1) has five subunits: alpha(3), beta(3), gamma(1), delta(1), epsilon(1). CF(0) has three main subunits: a(1), b(2) and c(9-12). The alpha and beta chains form an alternating ring which encloses part of the gamma chain. CF(1) is attached to CF(0) by a central stalk formed by the gamma and epsilon chains, while a peripheral stalk is formed by the delta and b chains.

The protein localises to the cell inner membrane. It carries out the reaction ATP + H2O + 4 H(+)(in) = ADP + phosphate + 5 H(+)(out). Its function is as follows. Produces ATP from ADP in the presence of a proton gradient across the membrane. The catalytic sites are hosted primarily by the beta subunits. The polypeptide is ATP synthase subunit beta (Thermotoga neapolitana (strain ATCC 49049 / DSM 4359 / NBRC 107923 / NS-E)).